A 275-amino-acid chain; its full sequence is Gap junction gamma-3 protein (275 aa).

Residues methionine 1–arginine 22 lie on the Cytoplasmic side of the membrane. The chain crosses the membrane as a helical span at residues leucine 23 to valine 43. Over phenylalanine 44–arginine 77 the chain is Extracellular. A helical membrane pass occupies residues phenylalanine 78 to leucine 98. Topologically, residues tyrosine 99–arginine 134 are cytoplasmic. A helical transmembrane segment spans residues leucine 135–glycine 155. Residues glycine 156–threonine 196 lie on the Extracellular side of the membrane. Residues methionine 197 to leucine 217 form a helical membrane-spanning segment. Over glycine 218–proline 275 the chain is Cytoplasmic. A compositionally biased stretch (basic and acidic residues) spans glutamate 254 to serine 267. The segment at glutamate 254–proline 275 is disordered.

The protein belongs to the connexin family. Gamma-type subfamily. In terms of assembly, a connexon is composed of a hexamer of connexins.

It localises to the cell membrane. Its subcellular location is the cell junction. The protein resides in the gap junction. One gap junction consists of a cluster of closely packed pairs of transmembrane channels, the connexons, through which materials of low MW diffuse from one cell to a neighboring cell. In Bos taurus (Bovine), this protein is Gap junction gamma-3 protein (GJC3).